A 289-amino-acid polypeptide reads, in one-letter code: Complement C1q tumor necrosis factor-related protein 7 (289 aa).

An N-terminal signal peptide occupies residues 1 to 16; the sequence is MIVLLYVTSLAICASG. The interval 36–134 is disordered; it reads IPGLPGPPGP…GDRGDQGDPG (99 aa). Residues 38–139 form the Collagen-like domain; it reads GLPGPPGPPG…QGDPGLPGVC (102 aa). Residues 48 to 61 show a composition bias toward low complexity; it reads ANGSPGPHGRIGLP. The segment covering 63 to 76 has biased composition (basic and acidic residues); sequence RDGRDGRKGEKGEK. Positions 78–91 are enriched in low complexity; the sequence is TAGLKGKTGPLGLA. Over residues 93 to 102 the composition is skewed to basic and acidic residues; sequence EKGDQGETGK. Residues 143–279 form the C1q domain; the sequence is SIVLKSAFSV…GFLLYVDTDY (137 aa).

The protein localises to the secreted. The chain is Complement C1q tumor necrosis factor-related protein 7 (C1qtnf7) from Mus musculus (Mouse).